Reading from the N-terminus, the 333-residue chain is Ketoreductase sphI (333 aa).

An NADP(+)-binding site is contributed by Tyr-167.

This sequence belongs to the NAD(P)-dependent epimerase/dehydratase family. Dihydroflavonol-4-reductase subfamily.

Its function is as follows. Ketoreductase; part of the gene cluster that mediates the biosynthesis of sphingofungins, bioactive molecules acting as sphingolipid inhibitors via inhibiting serine palmitoyl transferase (SPT). Does not seem to be involved in any biosynthetic process leading to the production of sphingofungins, but might be connected to a regulation or resistance mechanism. In Aspergillus fumigatus (strain CBS 144.89 / FGSC A1163 / CEA10) (Neosartorya fumigata), this protein is Ketoreductase sphI.